We begin with the raw amino-acid sequence, 359 residues long: MSHFKSKYHDELIANAAYIGTPGKGILAADESTGTIGKRLSSINVENVESNRQALRELLFTASWLFLQYLSGVILFEETLYQKTAAGKPFVDVLNEAGVLPGIKVDKGTVELAGTDGETTTQGLDGLGARCRKYYEAGARFAKWRAVLKIGANEPSEHSIHENAYGLARYAVICQENGLVPIVEPEILVDGSHDILKCAAITERVLAATYKALSDHHVILEGTLLKPNMVTPGSDAPKVAPEVIAEHTVRALQRTVPAAVPAVVFLSGGQSEEEASVNLNAINQIKGKKPWTLSFSFGRALQQSTLKAWGGKTENVKAAQDALLTRAKANSEATLGTYKGASNLGAGASESLHVKDYKY.

Positions 52 and 143 each coordinate substrate. The Proton acceptor role is filled by E184. The Schiff-base intermediate with dihydroxyacetone-P role is filled by K226.

This sequence belongs to the class I fructose-bisphosphate aldolase family.

It localises to the cytoplasm. It carries out the reaction beta-D-fructose 1,6-bisphosphate = D-glyceraldehyde 3-phosphate + dihydroxyacetone phosphate. The protein operates within carbohydrate degradation; glycolysis; D-glyceraldehyde 3-phosphate and glycerone phosphate from D-glucose: step 4/4. The protein is Fructose-bisphosphate aldolase, cytoplasmic isozyme 2 of Pisum sativum (Garden pea).